Reading from the N-terminus, the 574-residue chain is ATP-grasp enzyme fsqD (574 aa).

The ATP-grasp domain maps to 234–462 (NKFLTSKYVG…YWGLAAVLGV (229 aa)). 263–318 (ALPYPLIVKPCDGWSSEGVSRVESPDAFPAAVKSIDTSRHGTEFVMEPYCDGPEVD) is an ATP binding site. Mg(2+) contacts are provided by E394, E431, and N433. The Mn(2+) site is built by E394, E431, and N433.

Mg(2+) is required as a cofactor. Mn(2+) serves as cofactor.

Its pathway is secondary metabolite biosynthesis. In terms of biological role, ATP-grasp enzyme; part of the gene cluster that mediates the biosynthesis of the isoquinoline alkaloids fumisoquin A, fumisoquin B and fumisoquin C; as well as small amounts of fumipyrrole as a shunt metabolite. The products of the cluster lead to a brown coloration and are important for growth and conidiation. The nonribosomal peptide synthetase-like protein fsqF, which lacks a canonical condensation domain, is required for addition of a serine-derived dehydroalanine moiety to activated tyrosine but is not essential for the subsequent steps leading to isoquinoline formation. A different enzyme, most likely the ATP-grasp enzyme fsqD, is responsible for activation of tyrosine. Three additional enzymes encoded by the fsq cluster, the N-methyltransferase fsqC, the phenol 2-monooxygenase fsqG and the FAD-dependent oxidase fsqB, catalyze the formation of the isoquinoline ring system in the fumisoquins. FsqB converts the fspF thiolation domain-bound (2S,4S,5S)-2-amino-6-(3,4-dihydroxyphenyl)-4-hydroxy-5-(methylamino)hexanoyl into isoquinoline. The cyclization most likely proceeds via a two-step mechanism, beginning with FAD-dependent oxidation of the methyl group to an iminium species followed by electrophilic attack on the deprotonated phenol. This Aspergillus fumigatus (strain ATCC MYA-4609 / CBS 101355 / FGSC A1100 / Af293) (Neosartorya fumigata) protein is ATP-grasp enzyme fsqD.